The following is a 315-amino-acid chain: MSESLRIIFAGTPDFAARHLDALLSSGHNVVGVFTQPDRPAGRGKKLMPSPIKVLAEEEGLPVFQPVSLRPQENQQLVADLQADVMVVVAYGLILPKAVLEMPRLGCINIHGSLLPRWRGAAPIQRSLWAGDAETGVTIMQMDVGLDTGDMLYKLSCPITAEDTSGTLYDKLAELGPQGLITTLKQLADGTAKPEVQDETLVTYAEKLSKEEARIDWSLSAAQLERCIRAFNPWPMSWLEIEGQPVKVWKASVIDTATNAAPGTILEANKQGIQVATGDGILNLLSLQPAGKKAMSAQDLLNSRREWFVPGNRLV.

Serine 113–proline 116 serves as a coordination point for (6S)-5,6,7,8-tetrahydrofolate.

The protein belongs to the Fmt family.

The enzyme catalyses L-methionyl-tRNA(fMet) + (6R)-10-formyltetrahydrofolate = N-formyl-L-methionyl-tRNA(fMet) + (6S)-5,6,7,8-tetrahydrofolate + H(+). Attaches a formyl group to the free amino group of methionyl-tRNA(fMet). The formyl group appears to play a dual role in the initiator identity of N-formylmethionyl-tRNA by promoting its recognition by IF2 and preventing the misappropriation of this tRNA by the elongation apparatus. This chain is Methionyl-tRNA formyltransferase, found in Shigella flexneri serotype 5b (strain 8401).